Consider the following 131-residue polypeptide: Thioredoxin H4-1 (131 aa).

A Thioredoxin domain is found at 3–129 (SCVGKERSDE…LEKKVAALAD (127 aa)). Catalysis depends on nucleophile residues C55 and C58. C55 and C58 form a disulfide bridge.

The protein belongs to the thioredoxin family. Plant H-type subfamily.

It is found in the cytoplasm. Its function is as follows. Probable thiol-disulfide oxidoreductase that may be involved in the redox regulation of a number of cytosolic enzymes. The polypeptide is Thioredoxin H4-1 (Oryza sativa subsp. japonica (Rice)).